We begin with the raw amino-acid sequence, 129 residues long: Protein 2B* (129 aa).

2 disordered regions span residues 1–28 (PFTFKPRQRPVFSDSRSGSVINGSNPTA) and 91–129 (DCRDDDSSDASGPLDAALLGSLDSSRDHKPDKPVRRNSS). The span at 14 to 28 (DSRSGSVINGSNPTA) shows a compositional bias: polar residues. The segment covering 99 to 113 (DASGPLDAALLGSLD) has biased composition (low complexity). Residues 114–129 (SSRDHKPDKPVRRNSS) are compositionally biased toward basic and acidic residues.

Belongs to the encephalomyocarditis virus protein 2B* family.

In Homo sapiens (Human), this protein is Protein 2B*.